A 380-amino-acid polypeptide reads, in one-letter code: GDSL esterase/lipase At3g26430 (380 aa).

A signal peptide spans 1 to 25; the sequence is METNLLLVKCVLLASCLIHPRACSP. The active-site Nucleophile is the Ser-38. N-linked (GlcNAc...) asparagine glycosylation is found at Asn-97, Asn-115, and Asn-183. Residues Asp-346 and His-349 contribute to the active site.

The protein belongs to the 'GDSL' lipolytic enzyme family.

It localises to the secreted. The enzyme catalyses hexadecanoate ester + H2O = an aliphatic alcohol + hexadecanoate + H(+). It catalyses the reaction a butanoate ester + H2O = an aliphatic alcohol + butanoate + H(+). Its activity is regulated as follows. Lipase activity is inhibited by phenylmethylsulfonyl fluoride (PMSF), but not neostigmine bromide (NB). Its function is as follows. Lipase that can hydrolyze p-nitrophenyl butyrate and p-nitrophenyl palmitate in vitro. Possesses low activity against p-nitrophenyl acetate. Substrate preference is p-nitrophenyl palmitate &gt; p-nitrophenyl butyrate &gt;&gt; p-nitrophenyl acetate. Lacks cholinesterase activity. The protein is GDSL esterase/lipase At3g26430 of Arabidopsis thaliana (Mouse-ear cress).